The primary structure comprises 762 residues: Cell surface protein (762 aa).

An N-terminal signal peptide occupies residues 1 to 26 (MKNLKKLIAVVSTFALVFSAMAVGFA). SLH domains follow at residues 27 to 90 (ATTP…EMAK), 92 to 155 (EKSA…WPYG), and 156 to 204 (YLAK…KEVL). Y297, Y516, Y520, and Y632 each carry an O-linked (Glc...) tyrosine glycan.

In terms of processing, glycosylated; contains 8% carbohydrates, which correspond to about 40 to 50 sugar molecules per monomer. O-linked glycans consist of Glc, GalNAc and GlcNAc.

It is found in the secreted. The protein resides in the cell wall. The protein localises to the S-layer. In terms of biological role, the S-layer is a paracrystalline mono-layered assembly of proteins which coat the surface of bacteria. In Thermoanaerobacter kivui (Acetogenium kivui), this protein is Cell surface protein.